The primary structure comprises 167 residues: Bacterial non-heme ferritin-like protein (167 aa).

A Ferritin-like diiron domain is found at M1–K145.

It belongs to the ferritin family. Prokaryotic subfamily.

The protein localises to the cytoplasm. This is Bacterial non-heme ferritin-like protein (ftnB) from Escherichia coli O157:H7.